Reading from the N-terminus, the 573-residue chain is Excitatory amino acid transporter 2 (573 aa).

The segment covering 1 to 11 (MASTEGANNMP) has biased composition (polar residues). Residues 1–29 (MASTEGANNMPKQVEVRMHDSHLSSEEPK) are disordered. The Cytoplasmic segment spans residues 1–44 (MASTEGANNMPKQVEVRMHDSHLSSEEPKHRNLGMRMCDKLGKN). 4 positions are modified to phosphoserine: serine 3, serine 21, serine 24, and serine 25. The span at 14–29 (VEVRMHDSHLSSEEPK) shows a compositional bias: basic and acidic residues. Cysteine 38 carries the S-palmitoyl cysteine lipid modification. 3 consecutive transmembrane segments (helical) span residues 45 to 64 (LLLSLTVFGVILGAVCGGLL), 88 to 108 (MLKMLILPLIISSLITGLSGL), and 121 to 142 (MVYYMSTTIIAAVLGVILVLAI). 2 N-linked (GlcNAc...) asparagine glycosylation sites follow: asparagine 205 and asparagine 215. Transmembrane regions (helical) follow at residues 235–258 (FKDGMNVLGLIGFFIAFGIAMGKM), 268–295 (FFNILNEIVMKLVIMIMWYSPLGIACLI), and 317–338 (ITVIVGLIIHGGIFLPLIYFVV). Positions 344-374 (FSFFAGIFQAWITALGTASSAGTLPVTFRCL) form an intramembrane region, discontinuously helical. 361–363 (ASS) provides a ligand contact to L-aspartate. The chain crosses the membrane as a helical span at residues 384–410 (VTRFVLPVGATINMDGTALYEAVAAIF). Glycine 392, threonine 394, and asparagine 396 together coordinate Na(+). Residues threonine 400, 441–445 (IPSAG), aspartate 474, and asparagine 481 each bind L-aspartate. The discontinuously helical intramembrane region spans 424 to 457 (IVTVSLTATLASIGAASIPSAGLVTMLLILTAVG). The chain crosses the membrane as a helical span at residues 471–492 (WLLDRMRTSVNVVGDSFGAGIV). Na(+) contacts are provided by asparagine 481 and aspartate 485. A phosphoserine mark is found at serine 505, serine 520, serine 531, and serine 533. Tyrosine 538 is subject to Phosphotyrosine. Phosphoserine is present on residues serine 543, serine 559, and serine 563.

This sequence belongs to the dicarboxylate/amino acid:cation symporter (DAACS) (TC 2.A.23) family. SLC1A2 subfamily. In terms of assembly, homotrimer. Interacts with AJUBA. Post-translationally, glycosylated. In terms of processing, palmitoylation at Cys-38 is not required for correct subcellular localization, but is important for glutamate uptake activity. In terms of tissue distribution, localized in brain and is highly enriched in the Purkinje cell layer in cerebellum.

It is found in the cell membrane. It carries out the reaction K(+)(in) + L-glutamate(out) + 3 Na(+)(out) + H(+)(out) = K(+)(out) + L-glutamate(in) + 3 Na(+)(in) + H(+)(in). It catalyses the reaction D-aspartate(out) + K(+)(in) + 3 Na(+)(out) + H(+)(out) = D-aspartate(in) + K(+)(out) + 3 Na(+)(in) + H(+)(in). The catalysed reaction is K(+)(in) + L-aspartate(out) + 3 Na(+)(out) + H(+)(out) = K(+)(out) + L-aspartate(in) + 3 Na(+)(in) + H(+)(in). In terms of biological role, sodium-dependent, high-affinity amino acid transporter that mediates the uptake of L-glutamate and also L-aspartate and D-aspartate. Functions as a symporter that transports one amino acid molecule together with two or three Na(+) ions and one proton, in parallel with the counter-transport of one K(+) ion. Mediates Cl(-) flux that is not coupled to amino acid transport; this avoids the accumulation of negative charges due to aspartate and Na(+) symport. Essential for the rapid removal of released glutamate from the synaptic cleft, and for terminating the postsynaptic action of glutamate. The sequence is that of Excitatory amino acid transporter 2 (Slc1a2) from Rattus norvegicus (Rat).